The chain runs to 524 residues: Cytosolic Fe-S cluster assembly factor NAR1 (524 aa).

The [4Fe-4S] cluster site is built by C20, C52, C55, C58, C158, and C206. Residues 362 to 388 form a disordered region; the sequence is IRKRPTANGNDNSISLSSSINNQDNNN. Low complexity predominate over residues 369 to 388; that stretch reads NGNDNSISLSSSINNQDNNN. The [4Fe-4S] cluster site is built by C408 and C412. Residues 501-524 are disordered; sequence SSISETHNGDSKNTIEQPVQFTTW.

The protein belongs to the NARF family.

Its function is as follows. Component of the cytosolic Fe/S protein assembly machinery. Required for maturation of extramitochondrial Fe/S proteins. May play a role in the transfer of pre-assembled Fe/S clusters to target apoproteins. This is Cytosolic Fe-S cluster assembly factor NAR1 (NAR1) from Vanderwaltozyma polyspora (strain ATCC 22028 / DSM 70294 / BCRC 21397 / CBS 2163 / NBRC 10782 / NRRL Y-8283 / UCD 57-17) (Kluyveromyces polysporus).